Consider the following 413-residue polypeptide: Chemotactic signal transduction system substrate-binding protein BasB (413 aa).

A signal peptide spans 1–31 (MHSTTRREWLGAIGATAATGLAGCAGVGGAG).

The protein localises to the cell membrane. Mediates chemotaxis towards five attractant amino acids (leucine, isoleucine, valine, methionine and cysteine). May function as a receptor that binds the amino acids and transduces a signal to BasT. Has probably no additional role in transport. The polypeptide is Chemotactic signal transduction system substrate-binding protein BasB (basB) (Halobacterium salinarum (strain ATCC 29341 / DSM 671 / R1)).